The following is a 758-amino-acid chain: Maturase-like protein 2 (758 aa).

The protein localises to the plastid. It localises to the chloroplast. This Euglena gracilis protein is Maturase-like protein 2 (mat2).